The following is a 168-amino-acid chain: MKKAKRNPLLARLAGRLELTLDVRSDAAALPPPALIRRACQAALRRDVKQAQISIVIVDAAEGRQLNNDYRGKDYATNVLSFALNEGEPVEGLPLFGDLVLCAPVVEQEAAEQNKALMAHYAHLLVHGMLHLQGFDHEEDAEAEAMEVLETVIVKQLGYPDPYHEEHI.

Residues His-127, His-131, and His-137 each coordinate Zn(2+).

The protein belongs to the endoribonuclease YbeY family. Zn(2+) is required as a cofactor.

It localises to the cytoplasm. Single strand-specific metallo-endoribonuclease involved in late-stage 70S ribosome quality control and in maturation of the 3' terminus of the 16S rRNA. The protein is Endoribonuclease YbeY of Chromobacterium violaceum (strain ATCC 12472 / DSM 30191 / JCM 1249 / CCUG 213 / NBRC 12614 / NCIMB 9131 / NCTC 9757 / MK).